The chain runs to 361 residues: tRNA/tmRNA (uracil-C(5))-methyltransferase (361 aa).

S-adenosyl-L-methionine is bound by residues Gln-185, Tyr-213, Asn-218, Glu-234, and Asp-294. Cys-319 serves as the catalytic Nucleophile. Glu-353 serves as the catalytic Proton acceptor.

This sequence belongs to the class I-like SAM-binding methyltransferase superfamily. RNA M5U methyltransferase family. TrmA subfamily.

It catalyses the reaction uridine(54) in tRNA + S-adenosyl-L-methionine = 5-methyluridine(54) in tRNA + S-adenosyl-L-homocysteine + H(+). It carries out the reaction uridine(341) in tmRNA + S-adenosyl-L-methionine = 5-methyluridine(341) in tmRNA + S-adenosyl-L-homocysteine + H(+). Dual-specificity methyltransferase that catalyzes the formation of 5-methyluridine at position 54 (m5U54) in all tRNAs, and that of position 341 (m5U341) in tmRNA (transfer-mRNA). The sequence is that of tRNA/tmRNA (uracil-C(5))-methyltransferase from Azotobacter vinelandii (strain DJ / ATCC BAA-1303).